We begin with the raw amino-acid sequence, 356 residues long: Nucleosome assembly protein 1;4 (356 aa).

A coiled-coil region spans residues 34–88 (VNALKNKLQNLAGQHSDILETLTPQVRKRVDVLRELQSQHDELESHFFEERAALE). The short motif at 55-70 (LTPQVRKRVDVLRELQ) is the Nuclear export signal element. Positions 230–235 (KKKPKK) match the Nuclear localization signal motif. Residues 304 to 356 (FTGEAAEGDEFEDIEDDDDDDDDDDDEDDEDEEDEDDEEEEKSKKKSSALKVE) are disordered. The segment covering 309 to 343 (AEGDEFEDIEDDDDDDDDDDDEDDEDEEDEDDEEE) has biased composition (acidic residues). A compositionally biased stretch (basic residues) spans 347–356 (KKKSSALKVE).

This sequence belongs to the nucleosome assembly protein (NAP) family. In terms of assembly, can form homomeric and heteromeric protein complexes with NAP1;3. Binds histones H2A and H2B in vivo. Also able to bind histones H1 and H4 in vitro. Interacts with CYCB1;1 and with alpha tubulin.

Its subcellular location is the nucleus. The protein resides in the cytoplasm. In terms of biological role, may modulate chromatin structure by regulation of nucleosome assembly/disassembly. Could function together with B-type cyclins in the regulation of microtubule dynamics. The polypeptide is Nucleosome assembly protein 1;4 (NAP1;4) (Nicotiana tabacum (Common tobacco)).